The following is a 186-amino-acid chain: Ribosome-recycling factor (186 aa).

Belongs to the RRF family.

The protein localises to the cytoplasm. Responsible for the release of ribosomes from messenger RNA at the termination of protein biosynthesis. May increase the efficiency of translation by recycling ribosomes from one round of translation to another. This is Ribosome-recycling factor from Allorhizobium ampelinum (strain ATCC BAA-846 / DSM 112012 / S4) (Agrobacterium vitis (strain S4)).